A 175-amino-acid chain; its full sequence is ATP synthase subunit b 2 (175 aa).

A helical membrane pass occupies residues 20-40 (LIFWTAVTFVIVLLILKKFAW).

This sequence belongs to the ATPase B chain family. F-type ATPases have 2 components, F(1) - the catalytic core - and F(0) - the membrane proton channel. F(1) has five subunits: alpha(3), beta(3), gamma(1), delta(1), epsilon(1). F(0) has four main subunits: a(1), b(2) and c(10-14). The alpha and beta chains form an alternating ring which encloses part of the gamma chain. F(1) is attached to F(0) by a central stalk formed by the gamma and epsilon chains, while a peripheral stalk is formed by the delta and b chains.

It localises to the cell inner membrane. Functionally, f(1)F(0) ATP synthase produces ATP from ADP in the presence of a proton or sodium gradient. F-type ATPases consist of two structural domains, F(1) containing the extramembraneous catalytic core and F(0) containing the membrane proton channel, linked together by a central stalk and a peripheral stalk. During catalysis, ATP synthesis in the catalytic domain of F(1) is coupled via a rotary mechanism of the central stalk subunits to proton translocation. Its function is as follows. Component of the F(0) channel, it forms part of the peripheral stalk, linking F(1) to F(0). The chain is ATP synthase subunit b 2 from Prosthecochloris aestuarii (strain DSM 271 / SK 413).